We begin with the raw amino-acid sequence, 198 residues long: Putative 3-methyladenine DNA glycosylase (198 aa).

It belongs to the DNA glycosylase MPG family.

This is Putative 3-methyladenine DNA glycosylase from Natranaerobius thermophilus (strain ATCC BAA-1301 / DSM 18059 / JW/NM-WN-LF).